A 370-amino-acid chain; its full sequence is Polyadenylate-binding protein 4-like (370 aa).

RRM domains lie at 10–88 (ASLY…WSQR), 98–174 (GNVF…RFKN), 190–267 (TNVY…RAQK), and 293–369 (VKLY…LAQR).

It belongs to the polyadenylate-binding protein type-1 family.

May bind RNA. This Homo sapiens (Human) protein is Polyadenylate-binding protein 4-like (PABPC4L).